Here is a 225-residue protein sequence, read N- to C-terminus: Uracil-DNA glycosylase (225 aa).

Aspartate 65 serves as the catalytic Proton acceptor.

The protein belongs to the uracil-DNA glycosylase (UDG) superfamily. UNG family.

The protein localises to the cytoplasm. The enzyme catalyses Hydrolyzes single-stranded DNA or mismatched double-stranded DNA and polynucleotides, releasing free uracil.. In terms of biological role, excises uracil residues from the DNA which can arise as a result of misincorporation of dUMP residues by DNA polymerase or due to deamination of cytosine. This chain is Uracil-DNA glycosylase, found in Bacillus anthracis (strain A0248).